We begin with the raw amino-acid sequence, 266 residues long: Interleukin-1 beta (266 aa).

Residues 1–114 (MAAVPELTSE…KTDADNFMSD (114 aa)) constitute a propeptide that is removed on maturation.

The protein belongs to the IL-1 family. In terms of assembly, monomer. In its precursor form, weakly interacts with full-length MEFV; the mature cytokine does not interact at all. Interacts with integrins ITGAV:ITGBV and ITGA5:ITGB1; integrin-binding is required for IL1B signaling. Interacts with cargo receptor TMED10; the interaction is direct and is required for the secretion of IL1B mature form. Interacts with HSP90AB1; the interaction facilitates cargo translocation into the ERGIC. Interacts with HSP90B1; the interaction facilitates cargo translocation into the ERGIC.

Its subcellular location is the cytoplasm. It is found in the cytosol. The protein localises to the secreted. It localises to the lysosome. The protein resides in the extracellular exosome. Functionally, potent pro-inflammatory cytokine. Initially discovered as the major endogenous pyrogen, induces prostaglandin synthesis, neutrophil influx and activation, T-cell activation and cytokine production, B-cell activation and antibody production, and fibroblast proliferation and collagen production. Promotes Th17 differentiation of T-cells. Synergizes with IL12/interleukin-12 to induce IFNG synthesis from T-helper 1 (Th1) cells. Plays a role in angiogenesis by inducing VEGF production synergistically with TNF and IL6. Involved in transduction of inflammation downstream of pyroptosis: its mature form is specifically released in the extracellular milieu by passing through the gasdermin-D (GSDMD) pore. In Canis lupus familiaris (Dog), this protein is Interleukin-1 beta (IL1B).